The sequence spans 228 residues: Sodium channel regulatory subunit beta-4 (228 aa).

Residues 1-30 form the signal peptide; the sequence is MPGAGDGGKAPARWLGTGLLGLFLLPVTLS. One can recognise an Ig-like C2-type domain in the interval 31-148; it reads LEVSVGKATD…NNLQHHATIF (118 aa). Residues 31 to 162 lie on the Extracellular side of the membrane; that stretch reads LEVSVGKATD…DRLEEVDNTV (132 aa). Residues Asn-45, Asn-71, and Asn-113 are each glycosylated (N-linked (GlcNAc...) asparagine). Cys-53 and Cys-131 form a disulfide bridge. A helical transmembrane segment spans residues 163–183; the sequence is TLIILAVVGGVIGLLILILLI. Residues 184–228 are Cytoplasmic-facing; it reads KKLIIFILKKTREKKKECLVSSSGNDNTENGLPGSKAEEKPPSKV. Residues 200–228 form a disordered region; the sequence is ECLVSSSGNDNTENGLPGSKAEEKPPSKV. Over residues 203 to 213 the composition is skewed to polar residues; it reads VSSSGNDNTEN. Basic and acidic residues predominate over residues 219–228; it reads KAEEKPPSKV.

The protein belongs to the sodium channel auxiliary subunit SCN4B (TC 8.A.17) family. As to quaternary structure, a voltage-gated sodium (Nav) channel consists of an ion-conducting pore-forming alpha subunit functional on its own that is regulated by one or more beta subunits. The beta subunit SCN4B is disulfide-linked to the pore-forming alpha subunit. Interacts with SCN1A; regulatory subunit of SCN1A/Nav1.1. Interacts with SCN2A; regulatory subunit of SCN2A/Nav1.2. Post-translationally, contains an interchain disulfide bond with SCN2A. In terms of processing, N-glycosylated. In terms of tissue distribution, expressed at a high level in dorsal root ganglia, at a lower level in brain, spinal cord, skeletal muscle and heart. Expressed in the atrium.

Its subcellular location is the cell membrane. Its function is as follows. Regulatory subunit of multiple voltage-gated sodium (Nav) channels directly mediating the depolarization of excitable membranes. Navs, also called VGSCs (voltage-gated sodium channels) or VDSCs (voltage-dependent sodium channels), operate by switching between closed and open conformations depending on the voltage difference across the membrane. In the open conformation they allow Na(+) ions to selectively pass through the pore, along their electrochemical gradient. The influx of Na+ ions provokes membrane depolarization, initiating the propagation of electrical signals throughout cells and tissues. The accessory beta subunits participate in localization and functional modulation of the Nav channels. Modulates the activity of SCN1A/Nav1.1. Modulates the activity of SCN2A/Nav1.2. In Homo sapiens (Human), this protein is Sodium channel regulatory subunit beta-4.